A 242-amino-acid chain; its full sequence is ATP-dependent dethiobiotin synthetase BioD (242 aa).

Residue 12–17 (SVGKTI) coordinates ATP. Position 16 (Thr-16) interacts with Mg(2+). Lys-37 is an active-site residue. Asp-66 contributes to the ATP binding site. Asp-66 and Glu-124 together coordinate Mg(2+). 184–185 (NR) contributes to the ATP binding site.

The protein belongs to the dethiobiotin synthetase family. In terms of assembly, homodimer. The cofactor is Mg(2+).

The protein localises to the cytoplasm. It carries out the reaction (7R,8S)-7,8-diammoniononanoate + CO2 + ATP = (4R,5S)-dethiobiotin + ADP + phosphate + 3 H(+). The protein operates within cofactor biosynthesis; biotin biosynthesis; biotin from 7,8-diaminononanoate: step 1/2. Functionally, catalyzes a mechanistically unusual reaction, the ATP-dependent insertion of CO2 between the N7 and N8 nitrogen atoms of 7,8-diaminopelargonic acid (DAPA, also called 7,8-diammoniononanoate) to form a ureido ring. This is ATP-dependent dethiobiotin synthetase BioD from Mannheimia succiniciproducens (strain KCTC 0769BP / MBEL55E).